We begin with the raw amino-acid sequence, 182 residues long: ATP-dependent protease subunit HslV (182 aa).

Threonine 12 is a catalytic residue. Na(+) is bound by residues alanine 167, cysteine 170, and threonine 173.

Belongs to the peptidase T1B family. HslV subfamily. In terms of assembly, a double ring-shaped homohexamer of HslV is capped on each side by a ring-shaped HslU homohexamer. The assembly of the HslU/HslV complex is dependent on binding of ATP.

Its subcellular location is the cytoplasm. The enzyme catalyses ATP-dependent cleavage of peptide bonds with broad specificity.. Its activity is regulated as follows. Allosterically activated by HslU binding. Protease subunit of a proteasome-like degradation complex believed to be a general protein degrading machinery. The chain is ATP-dependent protease subunit HslV from Chlorobium chlorochromatii (strain CaD3).